Reading from the N-terminus, the 363-residue chain is G-protein coupled receptor 4 (363 aa).

Topologically, residues 1 to 8 (MGNGTWEG) are extracellular. The N-linked (GlcNAc...) asparagine glycan is linked to N3. A helical membrane pass occupies residues 9-45 (CHVDSRVDHLFPPSLYIFVIGVGLPTNCLALWAAYRQ). 2 disulfide bridges follow: C9-C258 and C90-C168. Topologically, residues 46–49 (VRQR) are cytoplasmic. The chain crosses the membrane as a helical span at residues 50–80 (NELGVYLMNLSIADLLYICTLPLWVDYFLHH). Residues 81 to 85 (DNWIH) lie on the Extracellular side of the membrane. A helical membrane pass occupies residues 86–121 (GPGSCKLFGFIFYTNIYISIAFLCCISVDRYLAVAH). Topologically, residues 122 to 129 (PLRFARLR) are cytoplasmic. A helical membrane pass occupies residues 130–156 (RVKTAVAVSSVVWATELGANSVPLFHD). Over 157-172 (ELFRDRYNHTFCFEKF) the chain is Extracellular. Positions 157–172 (ELFRDRYNHTFCFEKF) are extracellular loop 2 (ECL2). N-linked (GlcNAc...) asparagine glycosylation occurs at N164. Residues 173-210 (PMEGWVAWMNLYRVFVGFLFPWALMLLSYRGILRAVRG) form a helical membrane-spanning segment. Residues 211 to 214 (SVST) lie on the Cytoplasmic side of the membrane. A helical transmembrane segment spans residues 215-250 (ERQEKAKIKRLALSLIAIVLVCFAPYHVLLLSRSAV). The Extracellular portion of the chain corresponds to 251-260 (YLGHPWDCGF). A helical transmembrane segment spans residues 261 to 289 (EERVFSAYHSSLAFTSLNCVADPILYCLV). Topologically, residues 290–363 (NEGARSDVAK…QLKMLPPPAP (74 aa)) are cytoplasmic. The interval 344–363 (ASPPSQGDQVQLKMLPPPAP) is disordered.

This sequence belongs to the G-protein coupled receptor 1 family.

The protein localises to the cell membrane. Its activity is regulated as follows. Activated by a network of residues that connects an extracellular-facing cavity to Glu-145, a conserved charged residue buried in the transmembrane core of the receptor. Protonation likely drives conformational changes in extracellular loop 2 (ECL2), which stabilizes movement of transmembrane 3 (TM3) and a series of rearrangements that connect the extracellular-facing cavity to Glu-145, a residue only conserved in proton-sensing G-protein coupled receptors. Functionally, proton-sensing G-protein coupled receptor activated by extracellular pH, which is required to monitor pH changes and generate adaptive reactions. Activated by an optimal pH of 6.8-7.2. Ligand binding causes a conformation change that triggers signaling via guanine nucleotide-binding proteins (G proteins) and modulates the activity of downstream effectors, such as adenylate cyclase. GPR4 is mainly coupled to G(s) G proteins and mediates activation of adenylate cyclase activity. May also couple with G(q) and G(12)/G(13) G proteins. Acts as a key regulator of respiratory sensitivity to CO2/H(+) in brain retrotrapezoid nucleus neurons: acts by mediating detection of protons generated by the formation of carbonic acid in the blood, an important mechanism to impulse to breathe. Also acts as a regulator of acid secretion in the kidney collecting duct by maintaining acid-base homeostasis in the kidney. Acidosis-induced GPR4 activation increases paracellular gap formation and permeability of vascular endothelial cells, possibly through the G(12)/G(13)/Rho GTPase signaling pathway. The sequence is that of G-protein coupled receptor 4 (GPR4) from Sus scrofa (Pig).